Here is a 266-residue protein sequence, read N- to C-terminus: Pre-mRNA-splicing factor PRP11 (266 aa).

A disordered region spans residues 1–21; sequence MNYLEGVGSKKGGGGIASESQ. The Matrin-type zinc finger occupies 66-96; sequence LVCKLCNTMHMSWSSVERHLGGKKHGLNVLR.

The protein belongs to the SF3A2 family. Belongs to the CWC complex (or CEF1-associated complex), a spliceosome sub-complex reminiscent of a late-stage spliceosome composed of the U2, U5 and U6 snRNAs and at least BUD13, BUD31, BRR2, CDC40, CEF1, CLF1, CUS1, CWC2, CWC15, CWC21, CWC22, CWC23, CWC24, CWC25, CWC27, ECM2, HSH155, IST3, ISY1, LEA1, MSL1, NTC20, PRP8, PRP9, PRP11, PRP19, PRP21, PRP22, PRP45, PRP46, SLU7, SMB1, SMD1, SMD2, SMD3, SMX2, SMX3, SNT309, SNU114, SPP2, SYF1, SYF2, RSE1 and YJU2. Interacts with CUS2.

The protein resides in the nucleus. MRNA splicing factors, PRP9, PRP11, and PRP21, are necessary for addition of the U2 snRNP to the pre-mRNA in an early step of spliceosome assembly. This Saccharomyces cerevisiae (strain ATCC 204508 / S288c) (Baker's yeast) protein is Pre-mRNA-splicing factor PRP11 (PRP11).